The chain runs to 338 residues: Phospho-2-dehydro-3-deoxyheptonate aldolase (338 aa).

This sequence belongs to the class-I DAHP synthase family. As to quaternary structure, homotetramer. It depends on a divalent metal cation as a cofactor.

The enzyme catalyses D-erythrose 4-phosphate + phosphoenolpyruvate + H2O = 7-phospho-2-dehydro-3-deoxy-D-arabino-heptonate + phosphate. It functions in the pathway metabolic intermediate biosynthesis; chorismate biosynthesis; chorismate from D-erythrose 4-phosphate and phosphoenolpyruvate: step 1/7. Its activity is regulated as follows. Inhibited by L-phenylalanine and L-tyrosine. Functionally, catalyzes the condensation of phosphoenolpyruvate (PEP) and D-erythrose-4-phosphate (E4P) giving rise to 3-deoxy-D-arabino-heptulosonate-7-phosphate (DAHP). This chain is Phospho-2-dehydro-3-deoxyheptonate aldolase (aroF), found in Thermotoga maritima (strain ATCC 43589 / DSM 3109 / JCM 10099 / NBRC 100826 / MSB8).